Consider the following 95-residue polypeptide: Co-chaperonin GroES (95 aa).

The protein belongs to the GroES chaperonin family. As to quaternary structure, heptamer of 7 subunits arranged in a ring. Interacts with the chaperonin GroEL.

Its subcellular location is the cytoplasm. In terms of biological role, together with the chaperonin GroEL, plays an essential role in assisting protein folding. The GroEL-GroES system forms a nano-cage that allows encapsulation of the non-native substrate proteins and provides a physical environment optimized to promote and accelerate protein folding. GroES binds to the apical surface of the GroEL ring, thereby capping the opening of the GroEL channel. The sequence is that of Co-chaperonin GroES from Streptococcus uberis (strain ATCC BAA-854 / 0140J).